Here is a 363-residue protein sequence, read N- to C-terminus: Phosphoserine aminotransferase (363 aa).

R42 lines the L-glutamate pocket. Pyridoxal 5'-phosphate-binding positions include 76 to 77 (GR), W102, T156, D175, and Q198. K199 is subject to N6-(pyridoxal phosphate)lysine. Position 240 to 241 (240 to 241 (NT)) interacts with pyridoxal 5'-phosphate.

The protein belongs to the class-V pyridoxal-phosphate-dependent aminotransferase family. SerC subfamily. In terms of assembly, homodimer. The cofactor is pyridoxal 5'-phosphate.

Its subcellular location is the cytoplasm. It carries out the reaction O-phospho-L-serine + 2-oxoglutarate = 3-phosphooxypyruvate + L-glutamate. The enzyme catalyses 4-(phosphooxy)-L-threonine + 2-oxoglutarate = (R)-3-hydroxy-2-oxo-4-phosphooxybutanoate + L-glutamate. Its pathway is amino-acid biosynthesis; L-serine biosynthesis; L-serine from 3-phospho-D-glycerate: step 2/3. The protein operates within cofactor biosynthesis; pyridoxine 5'-phosphate biosynthesis; pyridoxine 5'-phosphate from D-erythrose 4-phosphate: step 3/5. In terms of biological role, catalyzes the reversible conversion of 3-phosphohydroxypyruvate to phosphoserine and of 3-hydroxy-2-oxo-4-phosphonooxybutanoate to phosphohydroxythreonine. This chain is Phosphoserine aminotransferase, found in Shewanella sp. (strain ANA-3).